Reading from the N-terminus, the 351-residue chain is N-acetyl-gamma-glutamyl-phosphate reductase (351 aa).

Residue Cys-154 is part of the active site.

It belongs to the NAGSA dehydrogenase family. Type 1 subfamily.

Its subcellular location is the cytoplasm. It carries out the reaction N-acetyl-L-glutamate 5-semialdehyde + phosphate + NADP(+) = N-acetyl-L-glutamyl 5-phosphate + NADPH + H(+). It participates in amino-acid biosynthesis; L-arginine biosynthesis; N(2)-acetyl-L-ornithine from L-glutamate: step 3/4. Functionally, catalyzes the NADPH-dependent reduction of N-acetyl-5-glutamyl phosphate to yield N-acetyl-L-glutamate 5-semialdehyde. This chain is N-acetyl-gamma-glutamyl-phosphate reductase, found in Prochlorococcus marinus (strain MIT 9301).